A 337-amino-acid chain; its full sequence is PHD finger protein 11 (337 aa).

The C2HC pre-PHD-type zinc finger occupies 42–78; that stretch reads KRICALCPKDLECSVLYFAQSENIAAHENCLLYSSAL. The PHD-type zinc finger occupies 108–160; sequence LKCTFCGKKGATVGCDLKSCFKNYHFFCAKNDHAVLQADGRTGIYKVFCQQHA.

Interacts with BRCA1 and RELA.

Its subcellular location is the nucleus. Functionally, positive regulator of Th1-type cytokine gene expression. This chain is PHD finger protein 11 (PHF11), found in Bos taurus (Bovine).